A 223-amino-acid polypeptide reads, in one-letter code: Mediator of RNA polymerase II transcription subunit 8 (223 aa).

Residues 2-138 (SQSTASLVPE…VRETSGVTTA (137 aa)) are interaction with TBP1. Residues 33–59 (LDAVRMRLAQLTHSLRRIRDEMSKAEL) are a coiled coil.

The protein belongs to the Mediator complex subunit 8 family. As to quaternary structure, component of the Mediator complex, which is composed of at least 21 subunits that form three structurally distinct submodules. The Mediator head module contains MED6, MED8, MED11, SRB4/MED17, SRB5/MED18, ROX3/MED19, SRB2/MED20 and SRB6/MED22, the middle module contains MED1, MED4, NUT1/MED5, MED7, CSE2/MED9, NUT2/MED10, SRB7/MED21 and SOH1/MED31, and the tail module contains MED2, PGD1/MED3, RGR1/MED14, GAL11/MED15 and SIN4/MED16. The head and the middle modules interact directly with RNA polymerase II, whereas the elongated tail module interacts with gene-specific regulatory proteins. MED8 interacts directly with SRB5/MED18. Also interacts with Hexokinase B (HXK2). Interacts with TBP1.

The protein resides in the nucleus. In terms of biological role, component of the Mediator complex, a coactivator involved in the regulated transcription of nearly all RNA polymerase II-dependent genes. Mediator functions as a bridge to convey information from gene-specific regulatory proteins to the basal RNA polymerase II transcription machinery. The Mediator complex, having a compact conformation in its free form, is recruited to promoters by direct interactions with regulatory proteins and serves for the assembly of a functional preinitiation complex with RNA polymerase II and the general transcription factors. The Mediator complex unfolds to an extended conformation and partially surrounds RNA polymerase II, specifically interacting with the unphosphorylated form of the C-terminal domain (CTD) of RNA polymerase II. The Mediator complex dissociates from the RNA polymerase II holoenzyme and stays at the promoter when transcriptional elongation begins. MED8 binds to the consensus sequence 5'-[AC][AG]GAAAT-3' in both the UAS of SUC2 and the DRS2 of HXK2. This chain is Mediator of RNA polymerase II transcription subunit 8 (MED8), found in Saccharomyces cerevisiae (strain ATCC 204508 / S288c) (Baker's yeast).